Here is a 131-residue protein sequence, read N- to C-terminus: Acanthoscurrin-2 (131 aa).

Position 130 is a lysine amide (Lys-130).

Expressed in hemocytes and secreted into the plasma following bacterial immune challenge.

The protein localises to the secreted. Functionally, antimicrobial protein. Strong activity against the Gram-negative bacterium E.coli SBS363 and yeast C.albicans. No detectable activity against the Gram-positive bacterium M.luteus. The protein is Acanthoscurrin-2 of Acanthoscurria gomesiana (Tarantula spider).